Reading from the N-terminus, the 225-residue chain is Ribonuclease T (225 aa).

The disordered stretch occupies residues 1 to 21 (MSEDHFDDEHEGHGGGGGSRH). Residues 33 to 207 (VVVDVETGGF…YDTEKTAELF (175 aa)) enclose the Exonuclease domain. Mg(2+) contacts are provided by Asp-36, Glu-38, His-194, and Asp-199. The active-site Proton donor/acceptor is the His-194.

Belongs to the RNase T family. As to quaternary structure, homodimer. Mg(2+) is required as a cofactor.

In terms of biological role, trims short 3' overhangs of a variety of RNA species, leaving a one or two nucleotide 3' overhang. Responsible for the end-turnover of tRNA: specifically removes the terminal AMP residue from uncharged tRNA (tRNA-C-C-A). Also appears to be involved in tRNA biosynthesis. This Pseudomonas syringae pv. syringae (strain B728a) protein is Ribonuclease T.